Consider the following 1018-residue polypeptide: Unconventional myosin-Ig (1018 aa).

The residue at position 1 (Met1) is an N-acetylmethionine. The Myosin motor domain maps to 9–707 (YGKPDFVLLD…TLVTLEQSRA (699 aa)). 102-109 (GESGAGKT) serves as a coordination point for ATP. Residues 584–606 (MVALVENLASKEPFYVRCIKPNE) form an actin-binding region. The IQ domain maps to 710–739 (IPIIVLLLQKAWRGTLARWRCRRLRAIYTI). The 194-residue stretch at 824 to 1017 (GLRQDWGCRR…RGSFTLLWPS (194 aa)) folds into the TH1 domain.

The protein belongs to the TRAFAC class myosin-kinesin ATPase superfamily. Myosin family. Interacts with calmodulin; via its IQ motifs. Specifically expressed in hematopoietic cells.

The protein resides in the cell membrane. Its subcellular location is the cell projection. It is found in the phagocytic cup. Its function is as follows. Unconventional myosin required during immune response for detection of rare antigen-presenting cells by regulating T-cell migration. Unconventional myosins are actin-based motor molecules with ATPase activity and serve in intracellular movements. Acts as a regulator of T-cell migration by generating membrane tension, enforcing cell-intrinsic meandering search, thereby enhancing detection of rare antigens during lymph-node surveillance, enabling pathogen eradication. Also required in B-cells, where it regulates different membrane/cytoskeleton-dependent processes. Involved in Fc-gamma receptor (Fc-gamma-R) phagocytosis. In terms of biological role, constitutes the minor histocompatibility antigen HA-2. More generally, minor histocompatibility antigens (mHags) refer to immunogenic peptide which, when complexed with MHC, can generate an immune response after recognition by specific T-cells. The peptides are derived from polymorphic intracellular proteins, which are cleaved by normal pathways of antigen processing. The binding of these peptides to MHC class I or class II molecules and their expression on the cell surface can stimulate T-cell responses and thereby trigger graft rejection or graft-versus-host disease (GVHD) after hematopoietic stem cell transplantation from HLA-identical sibling donor. GVHD is a frequent complication after bone marrow transplantation (BMT), due to mismatch of minor histocompatibility antigen in HLA-matched sibling marrow transplants. HA-2 is restricted to MHC class I HLA-A*0201. This chain is Unconventional myosin-Ig (MYO1G), found in Homo sapiens (Human).